We begin with the raw amino-acid sequence, 524 residues long: Casein kinase I homolog 3 (524 aa).

Positions 14 to 319 (YAVGPKIGEG…YLISLMDDAL (306 aa)) constitute a Protein kinase domain. ATP contacts are provided by residues 20–28 (IGEGSFGVI) and Lys-60. Asp-150 acts as the Proton acceptor in catalysis. 2 disordered regions span residues 352-414 (HGYG…KQQH) and 427-474 (PETH…EHNL). Low complexity predominate over residues 360 to 373 (RVNGNTARNNVNTN). 2 stretches are compositionally biased toward polar residues: residues 374–413 (SKTR…TKQQ) and 429–474 (THSN…EHNL). A YXXZ targeting signal motif is present at residues 444 to 447 (YDSI). 7 S-palmitoyl cysteine lipidation sites follow: Cys-517, Cys-518, Cys-519, Cys-520, Cys-522, Cys-523, and Cys-524.

It belongs to the protein kinase superfamily. CK1 Ser/Thr protein kinase family. Casein kinase I subfamily.

Its subcellular location is the cell membrane. It localises to the nucleus membrane. The protein resides in the vacuole membrane. The catalysed reaction is L-seryl-[protein] + ATP = O-phospho-L-seryl-[protein] + ADP + H(+). It catalyses the reaction L-threonyl-[protein] + ATP = O-phospho-L-threonyl-[protein] + ADP + H(+). In terms of biological role, casein kinases are operationally defined by their preferential utilization of acidic proteins such as caseins as substrates. Phosphorylates MON1, inhibiting the guanine nucleotide exchange factor activity of the MON1-CCZ1 complex, possibly by preventing its recruitment to membranes by small GTPase RAB5 homologs. This chain is Casein kinase I homolog 3 (YCK3), found in Saccharomyces cerevisiae (strain ATCC 204508 / S288c) (Baker's yeast).